A 541-amino-acid chain; its full sequence is Synaptotagmin-1 (541 aa).

Residues 1 to 11 (MGFFSTILGFC) are Extracellular-facing. A helical transmembrane segment spans residues 12–32 (GFGVGISLGLVIGYVLFVYLL). Over 33 to 541 (PNDVKDPEIR…QIELEWRTAS (509 aa)) the chain is Cytoplasmic. An SMP-LTD domain is found at 67–249 (DFDRVDWINR…WPKTLVVPIL (183 aa)). Residues 227–509 (QEQIKDQVAN…TLGYVDIPVV (283 aa)) form a phospholipid binding region. C2 domains lie at 240–362 (WPKT…AFTL) and 401–521 (GFEE…NQKF). Positions 276, 282, 332, and 334 each coordinate Ca(2+).

Belongs to the synaptotagmin family. Interacts with cabbage leaf curl virus (CaLCuV) BC1 protein and tobacco mosaic virus (TMV) MP protein. Interacts with ROSY1. Requires Ca(2+) as cofactor. As to expression, expressed in roots, shoots, rosette and cauline leaves, inflorescences, and siliques. In roots, expressed in vascular bundle, epidermis, the differential zone of the tips of root hairs, and the quiescent center and columella of root tips.

It localises to the cell membrane. The protein localises to the endosome membrane. Functionally, plays an important role in maintaining plasma membrane integrity during freezing and osmotic stresses. May function in membrane resealing during calcium-dependent freezing tolerance. May regulate endocytosis and endosome recycling at the plasma membrane and cell-to-cell trafficking of cabbage leaf curl virus (CaLCuV) and tobacco mosaic virus (TMV) movement proteins via plasmodesmata. This chain is Synaptotagmin-1 (SYT1), found in Arabidopsis thaliana (Mouse-ear cress).